A 196-amino-acid polypeptide reads, in one-letter code: Rac-like GTP-binding protein ARAC5 (196 aa).

Residue 16 to 21 participates in GTP binding; the sequence is AVGKTC. The Effector region motif lies at 35-43; sequence YVPTVFDNF. GTP-binding positions include 119–121 and 159–161; these read KLD and SSK. Position 193 is a cysteine methyl ester (C193). C193 carries the S-geranylgeranyl cysteine lipid modification. A propeptide spans 194–196 (removed in mature form); it reads VFL.

This sequence belongs to the small GTPase superfamily. Rho family. In terms of assembly, interacts with GDI1 and ROPGEF8 homodimer. Binds to SPK1. In terms of tissue distribution, ubiquitous. Preferentially expressed at the tip of root hairs.

The protein localises to the cytoplasm. It localises to the membrane. It is found in the cell membrane. Its function is as follows. Involved in cell polarity control during the actin-dependent tip growth of root hairs, thus regulating root hair length and root hair initiation. Functionally, inactive GDP-bound Rho GTPases reside in the cytosol, are found in a complex with Rho GDP-dissociation inhibitors (Rho GDIs), and are released from the GDI protein in order to translocate to membranes upon activation. The protein is Rac-like GTP-binding protein ARAC5 of Arabidopsis thaliana (Mouse-ear cress).